Consider the following 259-residue polypeptide: Acyl-[acyl-carrier-protein]--UDP-N-acetylglucosamine O-acyltransferase (259 aa).

This sequence belongs to the transferase hexapeptide repeat family. LpxA subfamily. In terms of assembly, homotrimer.

It is found in the cytoplasm. The catalysed reaction is a (3R)-hydroxyacyl-[ACP] + UDP-N-acetyl-alpha-D-glucosamine = a UDP-3-O-[(3R)-3-hydroxyacyl]-N-acetyl-alpha-D-glucosamine + holo-[ACP]. The protein operates within glycolipid biosynthesis; lipid IV(A) biosynthesis; lipid IV(A) from (3R)-3-hydroxytetradecanoyl-[acyl-carrier-protein] and UDP-N-acetyl-alpha-D-glucosamine: step 1/6. In terms of biological role, involved in the biosynthesis of lipid A, a phosphorylated glycolipid that anchors the lipopolysaccharide to the outer membrane of the cell. The chain is Acyl-[acyl-carrier-protein]--UDP-N-acetylglucosamine O-acyltransferase from Nautilia profundicola (strain ATCC BAA-1463 / DSM 18972 / AmH).